The chain runs to 206 residues: Small ribosomal subunit protein uS4 (206 aa).

An S4 RNA-binding domain is found at 98–163; the sequence is MRLDNIVYRL…SEKFKTFVEN (66 aa).

Belongs to the universal ribosomal protein uS4 family. As to quaternary structure, part of the 30S ribosomal subunit. Contacts protein S5. The interaction surface between S4 and S5 is involved in control of translational fidelity.

One of the primary rRNA binding proteins, it binds directly to 16S rRNA where it nucleates assembly of the body of the 30S subunit. In terms of biological role, with S5 and S12 plays an important role in translational accuracy. The polypeptide is Small ribosomal subunit protein uS4 (Clostridium beijerinckii (strain ATCC 51743 / NCIMB 8052) (Clostridium acetobutylicum)).